The following is a 472-amino-acid chain: Glutamate--tRNA ligase (472 aa).

Positions 9–19 match the 'HIGH' region motif; the sequence is PSPTGYLHVGG. Zn(2+)-binding residues include C98, C100, C125, and H127. A 'KMSKS' region motif is present at residues 237 to 241; it reads KLSKR. K240 is an ATP binding site.

It belongs to the class-I aminoacyl-tRNA synthetase family. Glutamate--tRNA ligase type 1 subfamily. Monomer. Requires Zn(2+) as cofactor.

The protein resides in the cytoplasm. The catalysed reaction is tRNA(Glu) + L-glutamate + ATP = L-glutamyl-tRNA(Glu) + AMP + diphosphate. Functionally, catalyzes the attachment of glutamate to tRNA(Glu) in a two-step reaction: glutamate is first activated by ATP to form Glu-AMP and then transferred to the acceptor end of tRNA(Glu). The polypeptide is Glutamate--tRNA ligase (Klebsiella pneumoniae (strain 342)).